We begin with the raw amino-acid sequence, 485 residues long: Subtilisin-like protease 1 (485 aa).

Positions 1–19 are cleaved as a signal peptide; it reads MGIFRFISISLAAVSAANA. Positions 20–116 are excised as a propeptide; it reads GHILSMGHAK…VEPDTTITIH (97 aa). The Inhibitor I9 domain maps to 34 to 116; the sequence is SYIVVMKDGT…VEPDTTITIH (83 aa). In terms of domain architecture, Peptidase S8 spans 126-400; sequence SWGLARISSQ…NILINNGDAK (275 aa). Catalysis depends on charge relay system residues Asp158 and His190. Asn251 carries an N-linked (GlcNAc...) asparagine glycan. Ser345 acts as the Charge relay system in catalysis. The segment covering 377 to 394 has biased composition (polar residues); sequence GTSSVTNPGPGTRTNILI. The interval 377-462 is disordered; sequence GTSSVTNPGP…HTPFPNDDFN (86 aa). The span at 409–418 shows a compositional bias: pro residues; that stretch reads PSQPPKPSQP. Over residues 419-428 the composition is skewed to low complexity; the sequence is SKPQQPSEPQ. Pro residues predominate over residues 433 to 455; that stretch reads PQEPAPGQPAPAPAPVPQHPHTP.

The protein belongs to the peptidase S8 family.

The protein resides in the secreted. Secreted subtilisin-like serine protease with keratinolytic activity that contributes to pathogenicity. The protein is Subtilisin-like protease 1 (SUB1) of Arthroderma otae (strain ATCC MYA-4605 / CBS 113480) (Microsporum canis).